The following is a 422-amino-acid chain: uncharacterized protein (422 aa).

12 helical membrane-spanning segments follow: residues 23–43, 47–67, 90–110, 112–132, 151–171, 172–192, 228–248, 263–283, 291–308, 318–340, 352–372, and 381–401; these read IVKISGDMFAFNSILWFLIYD, AIGTALLIAVTFLPEAVLAPV, AIVLIIPLCHFAGFSPLWFVM, LMIVHSATGAAYNPASIALIP, AQIVRLGAVTLCGAFLTFISP, SYTMLIALVLYLVSGFLVLFI, ILYPLAIYCIFMNFAAAPWEA, IVYSLLKATTAAGAFLLGFVL, YGLLFVTAGIIEGFAFFI, VFFAAFTFGAAVSAVNVPEYTII, VYAVIHMISNISIPAGAVICG, and GKVIAVGGIVEIIAGIGILLF.

The protein belongs to the major facilitator superfamily.

The protein localises to the cell membrane. This is an uncharacterized protein from Bacillus subtilis (strain 168).